The following is a 111-amino-acid chain: Succinate dehydrogenase assembly factor 1B, mitochondrial (111 aa).

The protein belongs to the complex I LYR family. SDHAF1 subfamily. In terms of assembly, interacts with the iron-sulfur protein subunit within the SDH catalytic dimer.

Its subcellular location is the mitochondrion matrix. Its function is as follows. Plays an essential role in the assembly of succinate dehydrogenase (SDH), an enzyme complex (also referred to as respiratory complex II) that is a component of both the tricarboxylic acid (TCA) cycle and the mitochondrial electron transport chain, and which couples the oxidation of succinate to fumarate with the reduction of ubiquinone (coenzyme Q) to ubiquinol. Promotes maturation of the iron-sulfur protein subunit of the SDH catalytic dimer, protecting it from the deleterious effects of oxidants. May act together with SDHAF3. The chain is Succinate dehydrogenase assembly factor 1B, mitochondrial from Dictyostelium discoideum (Social amoeba).